Reading from the N-terminus, the 366-residue chain is Isopropyl malate dehydrogenase htyC (366 aa).

71 to 73 (VGG) contacts NADP(+). Residues Arg91 and Arg130 each coordinate substrate. 3 residues coordinate Mg(2+): Asp221, Asp246, and Asp250. 277-282 (GCVHGI) contacts NADP(+).

It belongs to the isocitrate and isopropylmalate dehydrogenases family. As to quaternary structure, homodimer. Requires Mg(2+) as cofactor. Mn(2+) is required as a cofactor.

The catalysed reaction is (2R,3S)-3-isopropylmalate + NAD(+) = 4-methyl-2-oxopentanoate + CO2 + NADH. It functions in the pathway antifungal biosynthesis. Its function is as follows. Isopropyl malate dehydrogenase; part of the gene cluster that mediates the de novo generation of L-homotyrosine from acetyl-CoA and 4-hydroxyphenyl-pyruvate. L-homotyrosine is a building block of echinocandin B, a fungal lipidated cyclic hexapeptide that acts as an antifungal agent. L-homotyrosine 4-hydroxyphenyl-pyruvate first undergoes an aldol-type condensation by htyA with the C-2 of acetyl-CoA followed by the release of CoA to form 2-(4-hydroxybenzyl)-malate. This is followed by isomerization of 2-(4-hydroxy-benzyl)-malate to 3-(4-hydroxybenzyl)-malate by htyD. Thereafter, 3-(4-hydroxybenzyl)-malate undergoes decarboxylation and oxidation to form 2-oxo-4-(4-hydroxybenzyl)butanoic acid, coupled to reduction of NAD(+) to NADH by htyC. The product then undergoes transamination catalyzed by htyB to form L-homotyrosine. The protein is Isopropyl malate dehydrogenase htyC of Aspergillus rugulosus (Emericella rugulosa).